The chain runs to 71 residues: Translation initiation factor IF-1 (71 aa).

An S1-like domain is found at 1–71; that stretch reads MSKDDLIQFT…LTKGRVIHRH (71 aa).

This sequence belongs to the IF-1 family. As to quaternary structure, component of the 30S ribosomal translation pre-initiation complex which assembles on the 30S ribosome in the order IF-2 and IF-3, IF-1 and N-formylmethionyl-tRNA(fMet); mRNA recruitment can occur at any time during PIC assembly.

It is found in the cytoplasm. Functionally, one of the essential components for the initiation of protein synthesis. Stabilizes the binding of IF-2 and IF-3 on the 30S subunit to which N-formylmethionyl-tRNA(fMet) subsequently binds. Helps modulate mRNA selection, yielding the 30S pre-initiation complex (PIC). Upon addition of the 50S ribosomal subunit IF-1, IF-2 and IF-3 are released leaving the mature 70S translation initiation complex. This is Translation initiation factor IF-1 from Rickettsia akari (strain Hartford).